The primary structure comprises 1232 residues: DNA topoisomerase 2 (1232 aa).

Residues asparagine 65, asparagine 94, 122–124 (SSN), 135–142 (GRHGYGAK), and 352–354 (QNK) contribute to the ATP site. The Toprim domain occupies 432-546 (RTLIVTEGDS…SLLNRNPGFI (115 aa)). Glutamate 438, aspartate 515, and aspartate 517 together coordinate Mg(2+). In terms of domain architecture, Topo IIA-type catalytic spans 681–1097 (LAHAVDGLKP…APVQMWLDEL (417 aa)). Tyrosine 771 (O-(5'-phospho-DNA)-tyrosine intermediate) is an active-site residue. The interaction with DNA stretch occupies residues 952-961 (SLTQRIYING). A disordered region spans residues 1161-1184 (YVPPPPSKRPHVGQSVGGGGGGGS). Residues 1175–1184 (SVGGGGGGGS) are compositionally biased toward gly residues.

The protein belongs to the type II topoisomerase family. In terms of assembly, homodimer. Mg(2+) is required as a cofactor. It depends on Mn(2+) as a cofactor. The cofactor is Ca(2+).

Its subcellular location is the nucleus. It carries out the reaction ATP-dependent breakage, passage and rejoining of double-stranded DNA.. Functionally, control of topological states of DNA by transient breakage and subsequent rejoining of DNA strands. Topoisomerase II makes double-strand breaks. The protein is DNA topoisomerase 2 (TOP2) of Trypanosoma cruzi.